Consider the following 274-residue polypeptide: Thiazole synthase (274 aa).

Catalysis depends on Lys-111, which acts as the Schiff-base intermediate with DXP. Residues Gly-172, 198–199, and 220–221 contribute to the 1-deoxy-D-xylulose 5-phosphate site; these read AG and NS. Residues 251 to 274 are disordered; that stretch reads RLPERAAASPSSPTTGIIAEAKTK.

It belongs to the ThiG family. In terms of assembly, homotetramer. Forms heterodimers with either ThiH or ThiS.

The protein resides in the cytoplasm. It catalyses the reaction [ThiS sulfur-carrier protein]-C-terminal-Gly-aminoethanethioate + 2-iminoacetate + 1-deoxy-D-xylulose 5-phosphate = [ThiS sulfur-carrier protein]-C-terminal Gly-Gly + 2-[(2R,5Z)-2-carboxy-4-methylthiazol-5(2H)-ylidene]ethyl phosphate + 2 H2O + H(+). It functions in the pathway cofactor biosynthesis; thiamine diphosphate biosynthesis. Functionally, catalyzes the rearrangement of 1-deoxy-D-xylulose 5-phosphate (DXP) to produce the thiazole phosphate moiety of thiamine. Sulfur is provided by the thiocarboxylate moiety of the carrier protein ThiS. In vitro, sulfur can be provided by H(2)S. The protein is Thiazole synthase of Prochlorococcus marinus (strain MIT 9313).